The primary structure comprises 540 residues: Phenylalanine--tRNA ligase beta subunit (540 aa).

In terms of domain architecture, B5 spans 268-342 (LRHTSVPFSL…MAYGYDRFTL (75 aa)). D320, D326, E329, and D330 together coordinate Mg(2+).

This sequence belongs to the phenylalanyl-tRNA synthetase beta subunit family. Type 2 subfamily. Tetramer of two alpha and two beta subunits. Mg(2+) is required as a cofactor.

It localises to the cytoplasm. The enzyme catalyses tRNA(Phe) + L-phenylalanine + ATP = L-phenylalanyl-tRNA(Phe) + AMP + diphosphate + H(+). This is Phenylalanine--tRNA ligase beta subunit from Metallosphaera sedula (strain ATCC 51363 / DSM 5348 / JCM 9185 / NBRC 15509 / TH2).